Consider the following 308-residue polypeptide: Oxygen-dependent coproporphyrinogen-III oxidase (308 aa).

Ser94 contacts substrate. His98 and His108 together coordinate a divalent metal cation. His108 acts as the Proton donor in catalysis. Residue 110–112 coordinates substrate; the sequence is NVR. Residues His147 and His177 each contribute to the a divalent metal cation site. Residues 242–277 are important for dimerization; the sequence is YVEFNLVWDRGTLFGLQTGGRTESILMSMPPLVRWE. 260 to 262 contacts substrate; sequence GGR.

It belongs to the aerobic coproporphyrinogen-III oxidase family. As to quaternary structure, homodimer. A divalent metal cation is required as a cofactor.

It localises to the cytoplasm. The enzyme catalyses coproporphyrinogen III + O2 + 2 H(+) = protoporphyrinogen IX + 2 CO2 + 2 H2O. The protein operates within porphyrin-containing compound metabolism; protoporphyrin-IX biosynthesis; protoporphyrinogen-IX from coproporphyrinogen-III (O2 route): step 1/1. In terms of biological role, involved in the heme biosynthesis. Catalyzes the aerobic oxidative decarboxylation of propionate groups of rings A and B of coproporphyrinogen-III to yield the vinyl groups in protoporphyrinogen-IX. The chain is Oxygen-dependent coproporphyrinogen-III oxidase from Yersinia enterocolitica serotype O:8 / biotype 1B (strain NCTC 13174 / 8081).